The sequence spans 321 residues: Biotin synthase (321 aa).

The Radical SAM core domain occupies 45–274; the sequence is FHGNRVDLCS…GALIRLCGGR (230 aa). [4Fe-4S] cluster is bound by residues Cys-63, Cys-67, and Cys-70. [2Fe-2S] cluster-binding residues include Cys-139, Cys-199, and Arg-269.

The protein belongs to the radical SAM superfamily. Biotin synthase family. As to quaternary structure, homodimer. It depends on [4Fe-4S] cluster as a cofactor. The cofactor is [2Fe-2S] cluster.

The enzyme catalyses (4R,5S)-dethiobiotin + (sulfur carrier)-SH + 2 reduced [2Fe-2S]-[ferredoxin] + 2 S-adenosyl-L-methionine = (sulfur carrier)-H + biotin + 2 5'-deoxyadenosine + 2 L-methionine + 2 oxidized [2Fe-2S]-[ferredoxin]. The protein operates within cofactor biosynthesis; biotin biosynthesis; biotin from 7,8-diaminononanoate: step 2/2. In terms of biological role, catalyzes the conversion of dethiobiotin (DTB) to biotin by the insertion of a sulfur atom into dethiobiotin via a radical-based mechanism. This chain is Biotin synthase, found in Pelotomaculum thermopropionicum (strain DSM 13744 / JCM 10971 / SI).